Here is a 156-residue protein sequence, read N- to C-terminus: Transcriptional repressor NrdR (156 aa).

A zinc finger lies at 3–34 (CPKCNSTHSRVVDSRHADEANAIRRRRECENC). Residues 49–139 (LIVVKKDGTR…VYKEFKDVDQ (91 aa)) form the ATP-cone domain.

This sequence belongs to the NrdR family. Zn(2+) is required as a cofactor.

Functionally, negatively regulates transcription of bacterial ribonucleotide reductase nrd genes and operons by binding to NrdR-boxes. The chain is Transcriptional repressor NrdR from Staphylococcus epidermidis (strain ATCC 35984 / DSM 28319 / BCRC 17069 / CCUG 31568 / BM 3577 / RP62A).